Consider the following 316-residue polypeptide: tRNA dimethylallyltransferase (316 aa).

17–24 provides a ligand contact to ATP; it reads GPTASGKT. 19 to 24 is a binding site for substrate; that stretch reads TASGKT. 3 interaction with substrate tRNA regions span residues 42–45, 166–170, and 247–252; these read DSAL, QRLSR, and RCVGYR.

The protein belongs to the IPP transferase family. In terms of assembly, monomer. It depends on Mg(2+) as a cofactor.

The enzyme catalyses adenosine(37) in tRNA + dimethylallyl diphosphate = N(6)-dimethylallyladenosine(37) in tRNA + diphosphate. Its function is as follows. Catalyzes the transfer of a dimethylallyl group onto the adenine at position 37 in tRNAs that read codons beginning with uridine, leading to the formation of N6-(dimethylallyl)adenosine (i(6)A). This Salmonella paratyphi C (strain RKS4594) protein is tRNA dimethylallyltransferase.